Here is a 115-residue protein sequence, read N- to C-terminus: T cell receptor beta variable 7-7 (115 aa).

The first 21 residues, 1–21, serve as a signal peptide directing secretion; it reads MGTSLLCWVVLGFLGTDHTGA. The Ig-like domain occupies 22–115; the sequence is GVSQSPRYKV…SAMYRCASSL (94 aa). Cysteines 42 and 111 form a disulfide.

Alpha-beta TR is a heterodimer composed of an alpha and beta chain; disulfide-linked. The alpha-beta TR is associated with the transmembrane signaling CD3 coreceptor proteins to form the TR-CD3 (TcR or TCR). The assembly of alpha-beta TR heterodimers with CD3 occurs in the endoplasmic reticulum where a single alpha-beta TR heterodimer associates with one CD3D-CD3E heterodimer, one CD3G-CD3E heterodimer and one CD247 homodimer forming a stable octameric structure. CD3D-CD3E and CD3G-CD3E heterodimers preferentially associate with TR alpha and TR beta chains, respectively. The association of the CD247 homodimer is the last step of TcR assembly in the endoplasmic reticulum and is required for transport to the cell surface.

It localises to the cell membrane. Its function is as follows. V region of the variable domain of T cell receptor (TR) beta chain that participates in the antigen recognition. Alpha-beta T cell receptors are antigen specific receptors which are essential to the immune response and are present on the cell surface of T lymphocytes. Recognize peptide-major histocompatibility (MH) (pMH) complexes that are displayed by antigen presenting cells (APC), a prerequisite for efficient T cell adaptive immunity against pathogens. Binding of alpha-beta TR to pMH complex initiates TR-CD3 clustering on the cell surface and intracellular activation of LCK that phosphorylates the ITAM motifs of CD3G, CD3D, CD3E and CD247 enabling the recruitment of ZAP70. In turn ZAP70 phosphorylates LAT, which recruits numerous signaling molecules to form the LAT signalosome. The LAT signalosome propagates signal branching to three major signaling pathways, the calcium, the mitogen-activated protein kinase (MAPK) kinase and the nuclear factor NF-kappa-B (NF-kB) pathways, leading to the mobilization of transcription factors that are critical for gene expression and essential for T cell growth and differentiation. The T cell repertoire is generated in the thymus, by V-(D)-J rearrangement. This repertoire is then shaped by intrathymic selection events to generate a peripheral T cell pool of self-MH restricted, non-autoaggressive T cells. Post-thymic interaction of alpha-beta TR with the pMH complexes shapes TR structural and functional avidity. The polypeptide is T cell receptor beta variable 7-7 (Homo sapiens (Human)).